The sequence spans 193 residues: CASP-like protein 2D1 (193 aa).

Positions 1–24 (MRANNNNTREEERSSSSKQQQPQA) are disordered. Residues 1-29 (MRANNNNTREEERSSSSKQQQPQAHMSLK) lie on the Cytoplasmic side of the membrane. Residues 30-50 (IIDSCLRLSVVPLSVATIWLT) traverse the membrane as a helical segment. The Extracellular portion of the chain corresponds to 51–73 (VTNHESNPDYGNLDYNSIMGLKY). Residues 74–94 (MVGVSAISAIYALLSTISLWV) traverse the membrane as a helical segment. At 95 to 109 (TCLVSKAWLFFVPDQ) the chain is on the cytoplasmic side. Residues 110-132 (VLAYVMTTSVAGATEIVYLLNKG) traverse the membrane as a helical segment. The Extracellular segment spans residues 133 to 151 (DKIVTWSEMCSSYPHYCSK). Residues 152–172 (LTIALGLHVFVLFFFLFLSVI) traverse the membrane as a helical segment. At 173–193 (SAYRAFSPFDPPCDSQTNIDA) the chain is on the cytoplasmic side.

Belongs to the Casparian strip membrane proteins (CASP) family. Homodimer and heterodimers.

Its subcellular location is the cell membrane. This is CASP-like protein 2D1 from Arabidopsis lyrata subsp. lyrata (Lyre-leaved rock-cress).